A 90-amino-acid polypeptide reads, in one-letter code: uncharacterized protein (90 aa).

Positions Met1–Ala20 are cleaved as a signal peptide.

The protein localises to the secreted. This is an uncharacterized protein from Mus musculus (Mouse).